We begin with the raw amino-acid sequence, 30 residues long: ASAAGAVRAGDDETLLNPVLNSLDNLVSGL.

L30 carries the post-translational modification Leucine amide.

As to expression, expressed by the skin dorsal glands.

It localises to the secreted. Its function is as follows. Lacks antimicrobial activity. Does not inhibit the formation of NO by neuronal nitric oxide. This is Rothein 3.3 from Litoria rothii (Roth's tree frog).